The following is a 190-amino-acid chain: Adenylate kinase (190 aa).

Position 12-17 (12-17 (GSGKTT)) interacts with ATP. The interval 34–63 (STGELLRAEVASGSERGKIIEGFTSKGNLV) is NMP. Residues Thr35, Arg40, 61 to 63 (NLV), 88 to 91 (GYPR), and Gln95 each bind AMP. The segment at 130 to 136 (GRARGAD) is LID. Arg131 serves as a coordination point for ATP. Residues Arg133 and Arg145 each coordinate AMP. ATP is bound at residue Arg173.

It belongs to the adenylate kinase family. As to quaternary structure, monomer.

It is found in the cytoplasm. It carries out the reaction AMP + ATP = 2 ADP. It participates in purine metabolism; AMP biosynthesis via salvage pathway; AMP from ADP: step 1/1. Functionally, catalyzes the reversible transfer of the terminal phosphate group between ATP and AMP. Plays an important role in cellular energy homeostasis and in adenine nucleotide metabolism. The polypeptide is Adenylate kinase (Wolinella succinogenes (strain ATCC 29543 / DSM 1740 / CCUG 13145 / JCM 31913 / LMG 7466 / NCTC 11488 / FDC 602W) (Vibrio succinogenes)).